A 695-amino-acid polypeptide reads, in one-letter code: UvrABC system protein B (695 aa).

Residues 31 to 414 (EGIESGLSFQ…EIQRSGQIAE (384 aa)) form the Helicase ATP-binding domain. 44–51 (GVTGSGKT) is an ATP binding site. Residues 97 to 120 (YYDYYQPEAYVPSRDLFIEKDSSI) carry the Beta-hairpin motif. A Helicase C-terminal domain is found at 435–601 (QVDDLMSEVS…GVNKRIKDLI (167 aa)). Residues 632 to 667 (AKEIQRLEKSMLEAARNMEFEQAAQYRDEIKNLRSK) enclose the UVR domain.

The protein belongs to the UvrB family. In terms of assembly, forms a heterotetramer with UvrA during the search for lesions. Interacts with UvrC in an incision complex.

It localises to the cytoplasm. In terms of biological role, the UvrABC repair system catalyzes the recognition and processing of DNA lesions. A damage recognition complex composed of 2 UvrA and 2 UvrB subunits scans DNA for abnormalities. Upon binding of the UvrA(2)B(2) complex to a putative damaged site, the DNA wraps around one UvrB monomer. DNA wrap is dependent on ATP binding by UvrB and probably causes local melting of the DNA helix, facilitating insertion of UvrB beta-hairpin between the DNA strands. Then UvrB probes one DNA strand for the presence of a lesion. If a lesion is found the UvrA subunits dissociate and the UvrB-DNA preincision complex is formed. This complex is subsequently bound by UvrC and the second UvrB is released. If no lesion is found, the DNA wraps around the other UvrB subunit that will check the other stand for damage. The polypeptide is UvrABC system protein B (Nitrosomonas europaea (strain ATCC 19718 / CIP 103999 / KCTC 2705 / NBRC 14298)).